The sequence spans 54 residues: ATP synthase protein 8 (54 aa).

The chain crosses the membrane as a helical span at residues 9–25 (WVFLFFLVWLVLGFLGL).

It belongs to the ATPase protein 8 family. In terms of assembly, F-type ATPases have 2 components, CF(1) - the catalytic core - and CF(0) - the membrane proton channel.

The protein localises to the mitochondrion membrane. In terms of biological role, mitochondrial membrane ATP synthase (F(1)F(0) ATP synthase or Complex V) produces ATP from ADP in the presence of a proton gradient across the membrane which is generated by electron transport complexes of the respiratory chain. F-type ATPases consist of two structural domains, F(1) - containing the extramembraneous catalytic core and F(0) - containing the membrane proton channel, linked together by a central stalk and a peripheral stalk. During catalysis, ATP synthesis in the catalytic domain of F(1) is coupled via a rotary mechanism of the central stalk subunits to proton translocation. Part of the complex F(0) domain. Minor subunit located with subunit a in the membrane. In Branchiostoma floridae (Florida lancelet), this protein is ATP synthase protein 8 (MTATP8).